The sequence spans 542 residues: Putative beta-glucosidase 23 (542 aa).

The signal sequence occupies residues 1–29 (MAACTSSLVSLLLLLLLLLLLLVAGEATA). N-linked (GlcNAc...) asparagine glycosylation is present at asparagine 34. An a beta-D-glucoside-binding site is contributed by glutamine 88. Asparagine 135 carries N-linked (GlcNAc...) asparagine glycosylation. Histidine 216 serves as a coordination point for a beta-D-glucoside. Residue glutamate 262 is the Proton donor of the active site. Cysteine 281 and cysteine 289 are oxidised to a cystine. Position 405 (tyrosine 405) interacts with a beta-D-glucoside. N-linked (GlcNAc...) asparagine glycosylation is present at asparagine 445. 2 residues coordinate a beta-D-glucoside: tryptophan 476 and phenylalanine 492.

This sequence belongs to the glycosyl hydrolase 1 family.

It carries out the reaction Hydrolysis of terminal, non-reducing beta-D-glucosyl residues with release of beta-D-glucose.. The protein is Putative beta-glucosidase 23 (BGLU23) of Oryza sativa subsp. japonica (Rice).